Here is a 184-residue protein sequence, read N- to C-terminus: Photosystem I assembly protein Ycf4 (184 aa).

2 helical membrane passes run 21–43 (NFCW…ISSY) and 58–80 (LFFP…SSYL).

Belongs to the Ycf4 family.

The protein localises to the plastid. Its subcellular location is the chloroplast thylakoid membrane. Functionally, seems to be required for the assembly of the photosystem I complex. This chain is Photosystem I assembly protein Ycf4, found in Carpobrotus chilensis (Sea fig).